A 190-amino-acid polypeptide reads, in one-letter code: Small ribosomal subunit protein eS7A (190 aa).

Serine 2 carries the post-translational modification N-acetylserine. Residues lysine 83, lysine 84, and lysine 124 each participate in a glycyl lysine isopeptide (Lys-Gly) (interchain with G-Cter in ubiquitin) cross-link.

The protein belongs to the eukaryotic ribosomal protein eS7 family. In terms of assembly, component of the small ribosomal subunit (SSU). Mature yeast ribosomes consist of a small (40S) and a large (60S) subunit. The 40S small subunit contains 1 molecule of ribosomal RNA (18S rRNA) and 33 different proteins (encoded by 57 genes). The large 60S subunit contains 3 rRNA molecules (25S, 5.8S and 5S rRNA) and 46 different proteins (encoded by 81 genes). Interacts with snoRNA U3. uS11 interacts with MPP10. Component of the ribosomal small subunit (SSU) processome composed of at least 40 protein subunits and snoRNA U3. Post-translationally, N-terminally acetylated by acetyltransferase NatA. Ubiquitinated at Lys-83 and Lys-84 in response to stalled ribosomes, leading to activation of the No-Go Decay (NGD) pathway: first monoubiquitinated by MOT2/NOT4, followed by formation by HEL2 of 'Lys-63'-linked polyubiquitin chains on monoubiquitin.

It localises to the cytoplasm. The protein localises to the nucleus. The protein resides in the nucleolus. In terms of biological role, component of the ribosome, a large ribonucleoprotein complex responsible for the synthesis of proteins in the cell. The small ribosomal subunit (SSU) binds messenger RNAs (mRNAs) and translates the encoded message by selecting cognate aminoacyl-transfer RNA (tRNA) molecules. The large subunit (LSU) contains the ribosomal catalytic site termed the peptidyl transferase center (PTC), which catalyzes the formation of peptide bonds, thereby polymerizing the amino acids delivered by tRNAs into a polypeptide chain. The nascent polypeptides leave the ribosome through a tunnel in the LSU and interact with protein factors that function in enzymatic processing, targeting, and the membrane insertion of nascent chains at the exit of the ribosomal tunnel. eS7 is involved in nucleolar processing of pre-18S ribosomal RNA and ribosome assembly. The chain is Small ribosomal subunit protein eS7A from Saccharomyces cerevisiae (strain ATCC 204508 / S288c) (Baker's yeast).